Reading from the N-terminus, the 383-residue chain is Guanine nucleotide-binding protein alpha-1 subunit (383 aa).

A disordered region spans residues 1 to 20 (MGLLCSRSRHHTEDTDENTQ). The N-myristoyl glycine moiety is linked to residue Gly-2. Cys-5 carries S-palmitoyl cysteine lipidation. The G-alpha domain occupies 37–383 (HIRKLLLLGA…RRNLLEAGLL (347 aa)). A G1 motif region spans residues 40-53 (KLLLLGAGESGKST). The GTP site is built by Glu-48, Ser-49, Gly-50, Lys-51, Ser-52, Thr-53, Asp-162, Leu-187, Tyr-188, Thr-193, Gly-221, Asn-287, Lys-288, Asp-290, and Ala-355. Ser-52 is a Mg(2+) binding site. Residues 185 to 193 (DVLYARVRT) are G2 motif. Thr-193 is a binding site for Mg(2+). The tract at residues 214–223 (YRLFDVGGQR) is G3 motif. Positions 283–290 (MLFLNKFD) are G4 motif. Residues 353–358 (TTALDQ) form a G5 motif region.

It belongs to the G-alpha family. As to quaternary structure, g proteins are composed of 3 units; alpha, beta and gamma. The alpha chain contains the guanine nucleotide binding site. Interacts with RGS1, THF1, the pirin protein PRN1, GTG1 and GTG2. Binds to GCR1. May interact with ADT3. No interactions with RACK1A, RACK1B or RACK1C. Interacts with PLDALPHA1. Interacts with CAND2/PMTR1. Requires Mg(2+) as cofactor. As to expression, more abundant in roots and/or leaves.

The protein resides in the cell membrane. Its function is as follows. Exhibits a fast rate of basal nucleotide exchange. Guanine nucleotide-binding proteins (G proteins) are involved as modulators or transducers in various transmembrane signaling systems. Together with GCR1, may regulate the cell cycle via a signaling cascade that uses phosphatidylinositol-specific phospholipase C (PI-PLC) as an effector and inositol 1,4,5-trisphosphate (IP(3)) as a second messenger. Promotes abscisic acid (ABA) responses in guard cells. Involved in the blue light (BL) signaling. Together with GCR1 and ADT3, required for BL-mediated synthesis of phenylpyruvate and subsequently of phenylalanine (Phe), in etiolated seedlings. Modulates root architecture (e.g. lateral root formation). Negatively regulated by RGS1. In collaboration with CAND2/PMTR1, regulates the melatonin-mediated stomatal closure involving H(2)O(2) and Ca(2+) signals. This chain is Guanine nucleotide-binding protein alpha-1 subunit, found in Arabidopsis thaliana (Mouse-ear cress).